A 142-amino-acid chain; its full sequence is Protein archease (142 aa).

3 residues coordinate Ca(2+): D12, D141, and I142.

The protein belongs to the archease family. As to quaternary structure, in solution, exists as a monomer, trimer and hexamer. Oligomeric states form a tripartite complex with tRNA and PAB1947 methyltransferase.

Activates the tRNA-splicing ligase complex by facilitating the enzymatic turnover of catalytic subunit RtcB. Acts by promoting the guanylylation of RtcB, a key intermediate step in tRNA ligation. Can also alter the NTP specificity of RtcB such that ATP, dGTP or ITP is used efficiently. Chaperone or modulator of proteins involved in DNA or RNA processing. Protects the tRNA (cytosine-5-)-methyltransferase PAB1947 against aggregation and increases its specificity. The polypeptide is Protein archease (Pyrococcus abyssi (strain GE5 / Orsay)).